Reading from the N-terminus, the 255-residue chain is Ribosome maturation factor RimP (255 aa).

The interval 177 to 255 (LRRGSAPPQD…ARLKNRDTLH (79 aa)) is disordered. Over residues 186–202 (DGEDVDEEAGEAPEDEV) the composition is skewed to acidic residues. The segment covering 216–230 (PKMDKKSDKKSDKPV) has biased composition (basic and acidic residues).

The protein belongs to the RimP family.

Its subcellular location is the cytoplasm. Required for maturation of 30S ribosomal subunits. The chain is Ribosome maturation factor RimP from Methylorubrum populi (strain ATCC BAA-705 / NCIMB 13946 / BJ001) (Methylobacterium populi).